Here is a 282-residue protein sequence, read N- to C-terminus: Non-selective voltage-gated ion channel VDAC2 (282 aa).

Alanine 1 is modified (N-acetylalanine). A run of 19 beta stranded transmembrane segments spans residues 25 to 34 (LVKLDVKTKS), 38 to 46 (VEFTTSGTS), 53 to 63 (VNGSLETKYKW), 68 to 75 (LTFTEKWN), 79 to 88 (TLGTEIAIED), 94 to 103 (LKLTFDTTFS), 110 to 119 (SGKVKAAYKQ), 122 to 129 (VNLGCDVD), 136 to 144 (AIHGSAVVG), 149 to 157 (LAGYQMTFD), 162 to 174 (KLTK…GYKT), 177 to 184 (FQLHTNVN), 188 to 197 (EFAGSIYQKV), 201 to 210 (METAVNLAWT), 217 to 226 (RFGIAAKYQL), 230 to 237 (AAISAKVN), 241 to 250 (LVGVGYTQTL), 253 to 262 (GVKLTLSALV), and 272 to 281 (HKLGLGLELE). Residues 241 to 243 (LVG) and 259 to 263 (SALVD) contribute to the NAD(+) site.

The protein belongs to the eukaryotic mitochondrial porin family. In terms of assembly, monomer, homodimer and higher order oligomers; formation of higher order structures is necessary for scramblase activity. As to expression, expressed in skeletal muscle and oocytes.

The protein resides in the mitochondrion outer membrane. Its subcellular location is the membrane. The catalysed reaction is chloride(in) = chloride(out). It catalyses the reaction K(+)(in) = K(+)(out). It carries out the reaction a 1,2-diacyl-sn-glycero-3-phospho-L-serine(in) = a 1,2-diacyl-sn-glycero-3-phospho-L-serine(out). The enzyme catalyses a 1,2-diacyl-sn-glycero-3-phosphocholine(in) = a 1,2-diacyl-sn-glycero-3-phosphocholine(out). The catalysed reaction is a 1,2-diacyl-sn-glycero-3-phospho-(1D-myo-inositol)(in) = a 1,2-diacyl-sn-glycero-3-phospho-(1D-myo-inositol)(out). Its function is as follows. Non-selective voltage-gated ion channel that mediates the transport of anions and cations through the mitochondrion outer membrane and plasma membrane. The channel adopts an open conformation at zero mV and a closed conformation at both positive and negative potentials. There are two populations of channels; the main that functions in a lower open-state conductance with lower ion selectivity, that switch, in a voltage-dependent manner, from the open to a low-conducting 'closed' state and the other that has a normal ion selectivity in the typical high conductance, 'open' state. Functionally, catalyzes the scrambling of phospholipids across the outer mitochondrial membrane; the mechanism is unrelated to channel activity and is capable of translocating both anionic and zwitterionic phospholipids. The chain is Non-selective voltage-gated ion channel VDAC2 from Xenopus laevis (African clawed frog).